Reading from the N-terminus, the 1232-residue chain is MSVEATGKPLKVGSRVEVIGKGYRGTVAYVGATLFATGKWVGVILDDSKGKNDGTVQGRRYFTCEENHGIFVRQSQIQVIEDGADTTSPETPEPTASKGLKKDVMETPKSSKLPTRPSSSAASSGTASASCGEISSSEPSTPAQTPLAAPIIPSPSSAITSPVAPLPGPGPSKEEENLRAQVKDLEEKLETLKMKRAEDKAKLKEMEKSKLQLEQVQEWKSKMQEQQADIQRQLKEAKKEAKEALEAKERYMEEMADTADAIEMATLDKEMAEERAESLQQEVDTLKDKVEEHKIDLEILKHEIEEKGSDGAASSYQVKQLEEQNARLKEALVRMRDLSASEKQEHIKVQKQMEKKNTELDTLRQQKEKLQEEASHMEKTIDELKEQVDAALGAEEMVETLAERNLDLEEKVRELRETVSDLEAINEMNDELQENARETELELREQLDMAGARVREAEKRVEAAQETVADYQQTIKKYRDLTAHLQEVNSELRNQQEASVEKEQQPSPEMFDFKIKFAETKAHAKAIEMELRKMEVTQANRHVSLLTSFMPDSFLRHGGDHDCILVLLLIPRLICKAELISKQAQEKFELSEVGEQKSGMRGAVGEQMSFAAGLVYSLTLLQATLHKYEQALDKCSVEVYKKVGMLYPEMSVHERSLDFLIELLHKDQLDETVNVEPLTKAIKYYQHLYSIHLADQAEECTMQLSDHIKFTQSALDCMGVEVSRLRAFLHAGQESSDFAILLKDLETSCSDIRQFCKKIRRRMPGTEAAGIPAALGFGQQVCETLLDCRKYLKCVVAVFQEVAAAGAQMIAPMGENEGLQALKLEDVAFKATEQIYGTKGSNPYECLRQSCSVVIATMNKMATAMQEGEYDAEKPQSKSPPPVEQRAAALRAEITDAEGLGLKLEDRETVIKELKKSLKIKGEELSEANVRLSLLEKKLDSASKEADDRVEKIQTKLEETQTVLKKKEKEFEETMDALQADIDQLESEKAELRQRLNNQSKRTIEGLRGVPASGVASIVSGLAGGVSSGQSLINGSGPVQVKDSPLLLQQIDALRLSMKHLKHENNKLKAHQIKTDLSSLPALHVPKLTLPKDRQKEEAMSGTLYRKTSQLLDALQQMSANAKVVDITHKKAGNPAAQLLEQTARLKSLSDTIDKLKNEVMKETVSQCPGANVPTDFATFPSTDFIKAKEEKKEDTVYIGKVTLSCQPGQGQIHKLVLTPEQLHELHERLIC.

In terms of domain architecture, CAP-Gly spans 31-73 (GATLFATGKWVGVILDDSKGKNDGTVQGRRYFTCEENHGIFVR). Disordered regions lie at residues 82–183 (DGAD…AQVK) and 339–358 (SASE…KKNT). Residues 86–95 (TTSPETPEPT) show a composition bias toward low complexity. Positions 108 to 117 (PKSSKLPTRP) are enriched in polar residues. Positions 118–130 (SSSAASSGTASAS) are enriched in low complexity. Residues 133–144 (EISSSEPSTPAQ) are compositionally biased toward polar residues. Low complexity predominate over residues 146–163 (PLAAPIIPSPSSAITSPV). 4 coiled-coil regions span residues 170 to 505 (GPSK…KEQQ), 908 to 1005 (ETVI…RTIE), 1046 to 1071 (LLLQ…LKAH), and 1136 to 1166 (AAQL…ETVS). The segment covering 172-183 (SKEEENLRAQVK) has biased composition (basic and acidic residues).

Belongs to the dynactin 150 kDa subunit family. In terms of assembly, monomer and homodimer. Subunit of dynactin, a multiprotein complex part of a tripartite complex with dynein and a adapter, such as BICDL1, BICD2 or HOOK3. The dynactin complex is built around ACTR1A/ACTB filament and consists of an actin-related filament composed of a shoulder domain, a pointed end and a barbed end. Its length is defined by its flexible shoulder domain. The soulder is composed of 2 DCTN1 subunits, 4 DCTN2 and 2 DCTN3. DCTN1/p150(glued) binds directly to microtubules and to cytoplasmic dynein.

The protein resides in the cytoplasm. The protein localises to the cytoskeleton. Its subcellular location is the microtubule organizing center. It localises to the centrosome. It is found in the centriole. The protein resides in the spindle. The protein localises to the cell cortex. In terms of biological role, part of the dynactin complex that activates the molecular motor dynein for ultra-processive transport along microtubules. Plays a key role in dynein-mediated retrograde transport of vesicles and organelles along microtubules by recruiting and tethering dynein to microtubules. Binds to both dynein and microtubules providing a link between specific cargos, microtubules and dynein. Essential for targeting dynein to microtubule plus ends, recruiting dynein to membranous cargos and enhancing dynein processivity (the ability to move along a microtubule for a long distance without falling off the track). Can also act as a brake to slow the dynein motor during motility along the microtubule. Can regulate microtubule stability by promoting microtubule formation, nucleation and polymerization and by inhibiting microtubule catastrophe in neurons. Inhibits microtubule catastrophe by binding both to microtubules and to tubulin, leading to enhanced microtubule stability along the axon. Plays a role in metaphase spindle orientation. Plays a role in centriole cohesion and subdistal appendage organization and function. Its recruitment to the centriole in a KIF3A-dependent manner is essential for the maintenance of centriole cohesion and the formation of subdistal appendage. Also required for microtubule anchoring at the mother centriole. Plays a role in primary cilia formation. In Xenopus laevis (African clawed frog), this protein is Dynactin subunit 1 (dctn1).